The primary structure comprises 473 residues: Maltose fermentation regulatory protein MAL13 (473 aa).

A DNA-binding region (zn(2)-C6 fungal-type) is located at residues C13–C39. The short motif at R46–R54 is the Nuclear localization signal element.

The protein belongs to the MAL13 family.

It is found in the nucleus. Its function is as follows. Regulates the coordinate transcription of structural MAL1S (maltase) and AGT1 (maltose permease) genes. The chain is Maltose fermentation regulatory protein MAL13 (MAL13) from Saccharomyces cerevisiae (strain ATCC 204508 / S288c) (Baker's yeast).